The following is a 738-amino-acid chain: Ribosomal RNA large subunit methyltransferase K/L (738 aa).

The THUMP domain maps to 46 to 157 (TAYRVCLWSR…ADQAVIGLDL (112 aa)).

The protein belongs to the methyltransferase superfamily. RlmKL family.

The protein resides in the cytoplasm. It carries out the reaction guanosine(2445) in 23S rRNA + S-adenosyl-L-methionine = N(2)-methylguanosine(2445) in 23S rRNA + S-adenosyl-L-homocysteine + H(+). The enzyme catalyses guanosine(2069) in 23S rRNA + S-adenosyl-L-methionine = N(2)-methylguanosine(2069) in 23S rRNA + S-adenosyl-L-homocysteine + H(+). In terms of biological role, specifically methylates the guanine in position 2445 (m2G2445) and the guanine in position 2069 (m7G2069) of 23S rRNA. The polypeptide is Ribosomal RNA large subunit methyltransferase K/L (Methylococcus capsulatus (strain ATCC 33009 / NCIMB 11132 / Bath)).